We begin with the raw amino-acid sequence, 117 residues long: Iron-sulfur cluster insertion protein ErpA (117 aa).

Residues C45, C109, and C111 each coordinate iron-sulfur cluster.

This sequence belongs to the HesB/IscA family. As to quaternary structure, homodimer. Requires iron-sulfur cluster as cofactor.

Its function is as follows. Required for insertion of 4Fe-4S clusters for at least IspG. The chain is Iron-sulfur cluster insertion protein ErpA from Chromohalobacter salexigens (strain ATCC BAA-138 / DSM 3043 / CIP 106854 / NCIMB 13768 / 1H11).